Consider the following 107-residue polypeptide: MNQIWLKVCAASDMQPGTIRRVNRVGAAPLAVYRVGDQFYATEDTCTHGIASLSEGTLDGDVIECPFHGGAFNVCTGMPASSPCTVPLGVFEVEVKEGEVYVAGEKK.

Positions 6 to 102 (LKVCAASDMQ…VEVKEGEVYV (97 aa)) constitute a Rieske domain. The [2Fe-2S] cluster site is built by Cys-46, His-48, Cys-65, and His-68.

Monomer. Carbazole 1,9a-dioxygenase complex consists of a terminal oxygenase component CarAa, a ferredoxin reductase component CarAd and a ferredoxin component CarAc. It depends on [2Fe-2S] cluster as a cofactor.

Its function is as follows. Part of the multicomponent carbazole 1,9a-dioxygenase (CARDO), that converts carbazole (CAR) into 2-aminobiphenyl-2,3-diol. Acts as a mediator in the electron transfer from CarAd to CarAa. This Metapseudomonas resinovorans (Pseudomonas resinovorans) protein is Ferredoxin CarAc (carAc).